A 406-amino-acid polypeptide reads, in one-letter code: Acetate kinase (406 aa).

Asn-8 is a binding site for Mg(2+). Position 15 (Lys-15) interacts with ATP. Substrate is bound at residue Arg-92. Asp-149 functions as the Proton donor/acceptor in the catalytic mechanism. ATP is bound by residues 209–213 (HLGNG), 283–285 (DFR), and 331–335 (GVGEN). Glu-385 contacts Mg(2+).

This sequence belongs to the acetokinase family. Homodimer. Requires Mg(2+) as cofactor. Mn(2+) serves as cofactor.

Its subcellular location is the cytoplasm. The catalysed reaction is acetate + ATP = acetyl phosphate + ADP. It functions in the pathway metabolic intermediate biosynthesis; acetyl-CoA biosynthesis; acetyl-CoA from acetate: step 1/2. Catalyzes the formation of acetyl phosphate from acetate and ATP. Can also catalyze the reverse reaction. The polypeptide is Acetate kinase (Corynebacterium aurimucosum (strain ATCC 700975 / DSM 44827 / CIP 107346 / CN-1) (Corynebacterium nigricans)).